Reading from the N-terminus, the 476-residue chain is Xylan O-acetyltransferase 4 (476 aa).

The tract at residues 1–37 is disordered; the sequence is MTKPQQQSPPSTTATTTTSPPPPPPSTPPPASSSSSS. Residues 1-63 are Cytoplasmic-facing; that stretch reads MTKPQQQSPP…SLLSALRRSP (63 aa). The span at 8-18 shows a compositional bias: low complexity; that stretch reads SPPSTTATTTT. The span at 19 to 31 shows a compositional bias: pro residues; sequence SPPPPPPSTPPPA. Residues 64–80 form a helical; Signal-anchor for type II membrane protein membrane-spanning segment; it reads VTTLVAAFFLLALFMYG. The Lumenal segment spans residues 81–476; that stretch reads EDVRTLAELS…PSPHPPLPPQ (396 aa). N-linked (GlcNAc...) asparagine glycosylation is found at Asn-103, Asn-128, and Asn-167. 4 disulfides stabilise this stretch: Cys-117–Cys-168, Cys-139–Cys-204, Cys-148–Cys-444, and Cys-360–Cys-440. The short motif at 191–193 is the GDS motif element; sequence GDS. Ser-193 functions as the Nucleophile in the catalytic mechanism. Residues Asn-299 and Asn-369 are each glycosylated (N-linked (GlcNAc...) asparagine). Asp-439 acts as the Proton donor in catalysis. The DXXH motif signature appears at 439–442; sequence DCIH. Catalysis depends on His-442, which acts as the Proton acceptor.

The protein belongs to the PC-esterase family. TBL subfamily. As to expression, highly expressed in leaves. Expressed in roots, stems and inflorescences.

It localises to the golgi apparatus membrane. Xylan acetyltransferase required for 2-O- and 3-O-monoacetylation of xylosyl residues in xylan. Catalyzes the 2-O-acetylation of xylan, followed by nonenzymatic acetyl migration to the O-3 position, resulting in products that are monoacetylated at both O-2 and O-3 positions. The protein is Xylan O-acetyltransferase 4 of Oryza sativa subsp. japonica (Rice).